Here is a 316-residue protein sequence, read N- to C-terminus: Methionyl-tRNA formyltransferase (316 aa).

111–114 contacts (6S)-5,6,7,8-tetrahydrofolate; the sequence is SLLP.

It belongs to the Fmt family.

The catalysed reaction is L-methionyl-tRNA(fMet) + (6R)-10-formyltetrahydrofolate = N-formyl-L-methionyl-tRNA(fMet) + (6S)-5,6,7,8-tetrahydrofolate + H(+). Attaches a formyl group to the free amino group of methionyl-tRNA(fMet). The formyl group appears to play a dual role in the initiator identity of N-formylmethionyl-tRNA by promoting its recognition by IF2 and preventing the misappropriation of this tRNA by the elongation apparatus. The sequence is that of Methionyl-tRNA formyltransferase from Limosilactobacillus fermentum (strain NBRC 3956 / LMG 18251) (Lactobacillus fermentum).